Consider the following 89-residue polypeptide: Phosphocarrier protein HPr (89 aa).

The HPr domain maps to 1–88 (MLEHELIVTN…ELFENRFNED (88 aa)). The active-site Pros-phosphohistidine intermediate is the histidine 15. The residue at position 46 (serine 46) is a Phosphoserine; by HPrK/P.

The protein belongs to the HPr family.

It localises to the cytoplasm. Phosphorylation on Ser-46 inhibits the phosphoryl transfer from enzyme I to HPr. Functionally, general (non sugar-specific) component of the phosphoenolpyruvate-dependent sugar phosphotransferase system (sugar PTS). This major carbohydrate active-transport system catalyzes the phosphorylation of incoming sugar substrates concomitantly with their translocation across the cell membrane. The phosphoryl group from phosphoenolpyruvate (PEP) is transferred to the phosphoryl carrier protein HPr by enzyme I. Phospho-HPr then transfers it to the PTS EIIA domain. The protein is Phosphocarrier protein HPr (ptsH) of Xylella fastidiosa (strain 9a5c).